Reading from the N-terminus, the 426-residue chain is Histidine--tRNA ligase (426 aa).

Belongs to the class-II aminoacyl-tRNA synthetase family. As to quaternary structure, homodimer.

The protein localises to the cytoplasm. The enzyme catalyses tRNA(His) + L-histidine + ATP = L-histidyl-tRNA(His) + AMP + diphosphate + H(+). The sequence is that of Histidine--tRNA ligase from Geobacillus thermodenitrificans (strain NG80-2).